Consider the following 84-residue polypeptide: Cell division topological specificity factor (84 aa).

This sequence belongs to the MinE family.

Prevents the cell division inhibition by proteins MinC and MinD at internal division sites while permitting inhibition at polar sites. This ensures cell division at the proper site by restricting the formation of a division septum at the midpoint of the long axis of the cell. In Desulfotalea psychrophila (strain LSv54 / DSM 12343), this protein is Cell division topological specificity factor.